The chain runs to 479 residues: Glutamate--tRNA ligase 2 (479 aa).

The 'HIGH' region signature appears at 10–20; the sequence is PSPTGSLHIGG. The 'KMSKS' region signature appears at 243-247; that stretch reads KLSKR. Lys-246 provides a ligand contact to ATP.

Belongs to the class-I aminoacyl-tRNA synthetase family. Glutamate--tRNA ligase type 1 subfamily. Monomer.

It localises to the cytoplasm. It catalyses the reaction tRNA(Glu) + L-glutamate + ATP = L-glutamyl-tRNA(Glu) + AMP + diphosphate. Its function is as follows. Catalyzes the attachment of glutamate to tRNA(Glu) in a two-step reaction: glutamate is first activated by ATP to form Glu-AMP and then transferred to the acceptor end of tRNA(Glu). This is Glutamate--tRNA ligase 2 from Thermoanaerobacter pseudethanolicus (strain ATCC 33223 / 39E) (Clostridium thermohydrosulfuricum).